The chain runs to 415 residues: YDG domain-containing protein At5g47160 (415 aa).

A disordered region spans residues 163 to 186 (KKLSNASRLRANAHRPTQHKDERR). One can recognise a YDG domain in the interval 262 to 407 (GSVPGIKVGD…NILFKFKLRR (146 aa)).

Its subcellular location is the nucleus. This Arabidopsis thaliana (Mouse-ear cress) protein is YDG domain-containing protein At5g47160.